Consider the following 236-residue polypeptide: NAD(P)H-hydrate epimerase (236 aa).

Residues 11–217 form the YjeF N-terminal domain; the sequence is AAALDQELMS…AIASKYGFEV (207 aa). Residue 61–65 coordinates (6S)-NADPHX; the sequence is NNGGD. Residues Asn-62 and Asp-123 each contribute to the K(+) site. (6S)-NADPHX-binding positions include 127–133 and Asp-156; that span reads GFSFSGE. Ser-159 is a K(+) binding site.

Belongs to the NnrE/AIBP family. It depends on K(+) as a cofactor.

It is found in the cytoplasm. The protein resides in the mitochondrion. The enzyme catalyses (6R)-NADHX = (6S)-NADHX. The catalysed reaction is (6R)-NADPHX = (6S)-NADPHX. Functionally, catalyzes the epimerization of the S- and R-forms of NAD(P)HX, a damaged form of NAD(P)H that is a result of enzymatic or heat-dependent hydration. This is a prerequisite for the S-specific NAD(P)H-hydrate dehydratase to allow the repair of both epimers of NAD(P)HX. This chain is NAD(P)H-hydrate epimerase, found in Fusarium vanettenii (strain ATCC MYA-4622 / CBS 123669 / FGSC 9596 / NRRL 45880 / 77-13-4) (Fusarium solani subsp. pisi).